The primary structure comprises 518 residues: Putative malate dehydrogenase 1B (518 aa).

It belongs to the LDH/MDH superfamily. MDH type 2 family.

This chain is Putative malate dehydrogenase 1B (MDH1B), found in Homo sapiens (Human).